A 1088-amino-acid chain; its full sequence is Exportin-T (1088 aa).

Positions 435 to 503 are enriched in low complexity; it reads KNNNNKNKNT…VKNANNIKNN (69 aa). Disordered stretches follow at residues 435–513 and 1059–1088; these read KNNN…DDDD and LNNNNNINNNNNNINNNGHTNGNGVNKNGH.

It belongs to the exportin family.

The protein localises to the nucleus. Its subcellular location is the cytoplasm. Functionally, mediates the nuclear export of aminoacylated tRNAs. The sequence is that of Exportin-T (xpot) from Dictyostelium discoideum (Social amoeba).